The primary structure comprises 92 residues: Small ribosomal subunit protein uS19 (92 aa).

It belongs to the universal ribosomal protein uS19 family.

Functionally, protein S19 forms a complex with S13 that binds strongly to the 16S ribosomal RNA. In Crocosphaera subtropica (strain ATCC 51142 / BH68) (Cyanothece sp. (strain ATCC 51142)), this protein is Small ribosomal subunit protein uS19.